We begin with the raw amino-acid sequence, 127 residues long: Large ribosomal subunit protein eL8 (127 aa).

Belongs to the eukaryotic ribosomal protein eL8 family. As to quaternary structure, part of the 50S ribosomal subunit. Probably part of the RNase P complex.

It localises to the cytoplasm. Functionally, multifunctional RNA-binding protein that recognizes the K-turn motif in ribosomal RNA, the RNA component of RNase P, box H/ACA, box C/D and box C'/D' sRNAs. The protein is Large ribosomal subunit protein eL8 of Saccharolobus islandicus (strain Y.N.15.51 / Yellowstone #2) (Sulfolobus islandicus).